The following is a 130-amino-acid chain: Small ribosomal subunit protein uS9 (130 aa).

It belongs to the universal ribosomal protein uS9 family.

This is Small ribosomal subunit protein uS9 from Blochmanniella floridana.